The sequence spans 603 residues: UvrABC system protein C (603 aa).

The GIY-YIG domain maps to 15-92 (DQPGCYLMKD…IKKHDPRFNI (78 aa)). Positions 197–232 (KTVKNDLMKKMQEAAENMEFEKAGEFRDQINAIETT) constitute a UVR domain.

It belongs to the UvrC family. Interacts with UvrB in an incision complex.

The protein resides in the cytoplasm. The UvrABC repair system catalyzes the recognition and processing of DNA lesions. UvrC both incises the 5' and 3' sides of the lesion. The N-terminal half is responsible for the 3' incision and the C-terminal half is responsible for the 5' incision. In Listeria monocytogenes serovar 1/2a (strain ATCC BAA-679 / EGD-e), this protein is UvrABC system protein C.